The chain runs to 371 residues: uncharacterized protein (371 aa).

Residues 110-140 (MEKFIDFDRCNKCGECARKICKAKWTPLNYL) enclose the 4Fe-4S ferredoxin-type domain.

This is an uncharacterized protein from Methanocaldococcus jannaschii (strain ATCC 43067 / DSM 2661 / JAL-1 / JCM 10045 / NBRC 100440) (Methanococcus jannaschii).